The chain runs to 610 residues: NTPase KAP family P-loop domain-containing protein 1 (610 aa).

The 414-residue stretch at 1-414 folds into the KAP NTPase domain; sequence MQQEAAQRES…NTVPITVRLL (414 aa). 3 helical membrane-spanning segments follow: residues 22-42, 118-138, and 157-177; these read AVSGWGVPQLLWYLVFLQPII, VCLGLLALLAALGLGVGLLYL, and VFGGAATTLSGSGLLMAVYSV. A disordered region spans residues 540–587; sequence ALKPPSPPKSPTRDTPHAAHRANSASRAPPSGRASGQAGEGHHTGDLA. Over residues 560 to 575 the composition is skewed to low complexity; that stretch reads RANSASRAPPSGRASG.

It localises to the membrane. In Homo sapiens (Human), this protein is NTPase KAP family P-loop domain-containing protein 1 (NKPD1).